Reading from the N-terminus, the 473-residue chain is Inactive pancreatic lipase-related protein 1 (473 aa).

The first 17 residues, 1–17 (MLILWTIPLFLLGAAQG), serve as a signal peptide directing secretion. Intrachain disulfides connect Cys-21-Cys-27 and Cys-109-Cys-120. Ser-171 acts as the Nucleophile in catalysis. The active-site Charge relay system is Asp-194. Ca(2+) is bound by residues Glu-205, Arg-208, Asp-210, and Asp-213. An intrachain disulfide couples Cys-255 to Cys-279. Residue His-281 is the Charge relay system of the active site. Disulfide bonds link Cys-303-Cys-314, Cys-317-Cys-322, and Cys-451-Cys-467. The PLAT domain maps to 356-467 (WRYRVSLTFS…EDILLTLLPC (112 aa)).

The protein belongs to the AB hydrolase superfamily. Lipase family. In terms of tissue distribution, expressed in female, but not in male, lacrimal gland. Expressed in male and female sublingual gland and pancreas.

It is found in the secreted. May function as inhibitor of dietary triglyceride digestion. Lacks detectable lipase activity (in vitro). The polypeptide is Inactive pancreatic lipase-related protein 1 (Pnliprp1) (Mus musculus (Mouse)).